We begin with the raw amino-acid sequence, 210 residues long: Large ribosomal subunit protein uL3 (210 aa).

A disordered region spans residues 126–167 (WGFQRGPSGHGSKNIREPGSTGNATFPGRVIKGKKMPGQKGN). Residues 156–167 (IKGKKMPGQKGN) show a composition bias toward basic residues.

It belongs to the universal ribosomal protein uL3 family. As to quaternary structure, part of the 50S ribosomal subunit. Forms a cluster with proteins L14 and L19.

Its function is as follows. One of the primary rRNA binding proteins, it binds directly near the 3'-end of the 23S rRNA, where it nucleates assembly of the 50S subunit. This is Large ribosomal subunit protein uL3 from Syntrophobacter fumaroxidans (strain DSM 10017 / MPOB).